Here is a 441-residue protein sequence, read N- to C-terminus: Histone-lysine N-methyltransferase set9 (441 aa).

The region spanning 108 to 221 is the SET domain; sequence CKFEICSTNQ…PGEEITTFYS (114 aa).

The protein belongs to the class V-like SAM-binding methyltransferase superfamily. Histone-lysine methyltransferase family. Suvar4-20 subfamily.

The protein localises to the nucleus. It localises to the chromosome. The enzyme catalyses L-lysyl(20)-[histone H4] + 3 S-adenosyl-L-methionine = N(6),N(6),N(6)-trimethyl-L-lysyl(20)-[histone H4] + 3 S-adenosyl-L-homocysteine + 3 H(+). Histone methyltransferase that specifically trimethylates 'Lys-20' of histone H4 to form H4K20me3. H4 'Lys-20' methylation is apparently not involved in the regulation of gene expression or heterochromatin function but participates in DNA damage response by giving a 'histone mark' required for the recruitment of the checkpoint protein Crb2 to sites of DNA damage. The protein is Histone-lysine N-methyltransferase set9 (set9) of Schizosaccharomyces pombe (strain 972 / ATCC 24843) (Fission yeast).